The chain runs to 177 residues: Ribosome maturation factor RimP (177 aa).

The protein belongs to the RimP family.

It is found in the cytoplasm. Its function is as follows. Required for maturation of 30S ribosomal subunits. The protein is Ribosome maturation factor RimP of Streptococcus sanguinis (strain SK36).